The following is a 350-amino-acid chain: Biotin synthase (350 aa).

A Radical SAM core domain is found at 41-268 (NEVQVSRLLS…KSRVRLSAGR (228 aa)). [4Fe-4S] cluster-binding residues include cysteine 56, cysteine 60, and cysteine 63. Positions 100, 131, 191, and 263 each coordinate [2Fe-2S] cluster.

Belongs to the radical SAM superfamily. Biotin synthase family. In terms of assembly, homodimer. The cofactor is [4Fe-4S] cluster. [2Fe-2S] cluster is required as a cofactor.

It carries out the reaction (4R,5S)-dethiobiotin + (sulfur carrier)-SH + 2 reduced [2Fe-2S]-[ferredoxin] + 2 S-adenosyl-L-methionine = (sulfur carrier)-H + biotin + 2 5'-deoxyadenosine + 2 L-methionine + 2 oxidized [2Fe-2S]-[ferredoxin]. It functions in the pathway cofactor biosynthesis; biotin biosynthesis; biotin from 7,8-diaminononanoate: step 2/2. Catalyzes the conversion of dethiobiotin (DTB) to biotin by the insertion of a sulfur atom into dethiobiotin via a radical-based mechanism. This is Biotin synthase from Shewanella pealeana (strain ATCC 700345 / ANG-SQ1).